Reading from the N-terminus, the 371-residue chain is Forkhead box protein J1.2 (371 aa).

Disordered regions lie at residues 45–74 (ANSRPPLPRASQGPCSPPAGDTASCQAPRT) and 80–99 (VAVPTAWASLPTPSPSPVQE). Positions 109 to 203 (KPPYSYATLI…VNGVLKRRRM (95 aa)) form a DNA-binding region, fork-head. A disordered region spans residues 228 to 248 (PSSHHMQHISGGHRQSRRYEK).

This sequence belongs to the FOXJ1 family. Expressed diffusely through much of gastrula and neurula stage embryos. At stage 23 (late neurula), limited to the otic vesicle. By stage 28 (tailbud), also expressed transiently in the presumptive nephrostomes of the pronephros. At stage 35 (early tadpole), expressed broadly in the head and strongly expressed in the developing gill structures.

The protein resides in the nucleus. Key transcription factor required for motile ciliogenesis. Activates genes essential for motile cilia formation and function. In Xenopus tropicalis (Western clawed frog), this protein is Forkhead box protein J1.2.